Consider the following 379-residue polypeptide: Glucose-insensitive transcription protein 7 (379 aa).

The region spanning 181–272 is the CS domain; that stretch reads SNRIRYDWSQ…VSEIKWEALV (92 aa). The SGS domain occupies 292–379; that stretch reads ASGNTKNKAK…PPQGMEPKKF (88 aa). The tract at residues 345–379 is disordered; it reads SYTESNGTALSTNWKDVKSKTFETKPPQGMEPKKF. A compositionally biased stretch (polar residues) spans 346–358; it reads YTESNGTALSTNW.

Its function is as follows. Involved in cyclic AMP (cAMP) pathway, possibly by participating in the assembly or the conformational activation of specific multiprotein complexes. The polypeptide is Glucose-insensitive transcription protein 7 (git7) (Schizosaccharomyces pombe (strain 972 / ATCC 24843) (Fission yeast)).